A 222-amino-acid polypeptide reads, in one-letter code: Superoxide dismutase [Mn], mitochondrial (222 aa).

The transit peptide at 1 to 24 (MLCRAACSTGRRLGPVAGAAGSRH) directs the protein to the mitochondrion. His50 contributes to the Mn(2+) binding site. Residue Tyr58 is modified to 3'-nitrotyrosine. N6-acetyllysine; alternate occurs at positions 68 and 75. 2 positions are modified to N6-succinyllysine; alternate: Lys68 and Lys75. Position 98 (His98) interacts with Mn(2+). Position 114 is an N6-acetyllysine (Lys114). N6-acetyllysine; alternate occurs at positions 122 and 130. Lys122 and Lys130 each carry N6-succinyllysine; alternate. The Mn(2+) site is built by Asp183 and His187. Lys202 is subject to N6-acetyllysine.

It belongs to the iron/manganese superoxide dismutase family. Homotetramer. Mn(2+) serves as cofactor. In terms of processing, nitrated under oxidative stress. Nitration coupled with oxidation inhibits the catalytic activity. Acetylation at Lys-122 decreases enzymatic activity. Deacetylated by SIRT3 upon exposure to ionizing radiations or after long fasting. Post-translationally, polyubiquitinated; leading to proteasomal degradation. Deubiquitinated by USP36 which increases protein stability.

It is found in the mitochondrion matrix. The enzyme catalyses 2 superoxide + 2 H(+) = H2O2 + O2. Functionally, destroys superoxide anion radicals which are normally produced within the cells and which are toxic to biological systems. This chain is Superoxide dismutase [Mn], mitochondrial (Sod2), found in Mus musculus (Mouse).